The sequence spans 427 residues: Acyl-lipid 8-desaturase (427 aa).

Positions 1 to 24 (MGRGGDSSGQAHPAAELAVPSDRA) are disordered. The 49-residue stretch at 36-84 (IVLYGKRVDVTKFQRTHPGGSKVFRIFQDRDATEQFESYHSKRAIKMME) folds into the Cytochrome b5 heme-binding domain. Residues H52 and H75 each contribute to the heme site. The Histidine box-1 signature appears at 178 to 182 (HSVFK). Residues 189 to 209 (VGWNNAAGYFLGFVQGYAVEW) traverse the membrane as a helical segment. A Histidine box-2 motif is present at residues 213–218 (RHNTHH). The next 2 helical transmembrane spans lie at 261–281 (VPVM…YVAM) and 286–306 (MLPQ…VFAG). The Histidine box-3 signature appears at 373 to 377 (QTEHH).

The protein belongs to the fatty acid desaturase type 1 family. The cofactor is Fe(2+).

It is found in the membrane. Its function is as follows. Fatty acid desaturase that introduces a cis double bond at the 8-position in 20-carbon polyunsaturated fatty acids incorporated in a glycerolipid that contain a Delta(8) double bond to yield (20:4(8,11,14,17)). The protein is Acyl-lipid 8-desaturase of Rebecca salina (Marine microalga).